Consider the following 346-residue polypeptide: MADDRKAALDAALKKIEKNYGKGSIMKLGEKIDQQVSTIPSGSLALDVALGVGGYPRGRIIEVYGPESSGKTTVALHAIAEVQKNGGTAAFIDAEHALDPQYAQKLGVNIDELLLSQPDTGEQGLEIADALVSSGAVDIVVVDSVAALVPRAEIDGEMGDSHVGLQARLMSQALRKLSGSINKTKTIAIFINQIREKVGVMFGNPEITPGGRALKFYATIRLEVRRAEQLKQGTDIVGNRTKIKVVKNKVAPPFKIAEVDVMYGQGISQEGELLDMAVEKDIVDKSGAWYSYKEDRIGQGRENAKNYMSTHPEMMAEVSALVRAAYGIGEDVEIPEETQAELPLEE.

An ATP-binding site is contributed by 65 to 72; that stretch reads GPESSGKT.

The protein belongs to the RecA family.

The protein resides in the cytoplasm. Its function is as follows. Can catalyze the hydrolysis of ATP in the presence of single-stranded DNA, the ATP-dependent uptake of single-stranded DNA by duplex DNA, and the ATP-dependent hybridization of homologous single-stranded DNAs. It interacts with LexA causing its activation and leading to its autocatalytic cleavage. This Enterococcus hirae (strain ATCC 9790 / DSM 20160 / JCM 8729 / LMG 6399 / NBRC 3181 / NCIMB 6459 / NCDO 1258 / NCTC 12367 / WDCM 00089 / R) protein is Protein RecA.